Consider the following 146-residue polypeptide: Putative phosphotransferase enzyme IIA component YadI (146 aa).

The region spanning 1 to 124 is the PTS EIIA type-4 domain; that stretch reads MLGWVITCHD…RIVELGAPEV (124 aa). His9 serves as the catalytic Tele-phosphohistidine intermediate.

The protein resides in the cytoplasm. In terms of biological role, the phosphoenolpyruvate-dependent sugar phosphotransferase system (sugar PTS), a major carbohydrate active -transport system, catalyzes the phosphorylation of incoming sugar substrates concomitantly with their translocation across the cell membrane. This is Putative phosphotransferase enzyme IIA component YadI (yadI) from Escherichia coli (strain K12).